The sequence spans 364 residues: Dual-specificity RNA methyltransferase RlmN (364 aa).

Glu91 functions as the Proton acceptor in the catalytic mechanism. Positions 97-333 (EDDRGTLCIS…TTTRKTRGDD (237 aa)) constitute a Radical SAM core domain. Residues Cys104 and Cys338 are joined by a disulfide bond. Residues Cys111, Cys115, and Cys118 each contribute to the [4Fe-4S] cluster site. Residues 164–165 (GE), Ser196, 218–220 (SLH), and Asn295 contribute to the S-adenosyl-L-methionine site. Cys338 acts as the S-methylcysteine intermediate in catalysis.

This sequence belongs to the radical SAM superfamily. RlmN family. It depends on [4Fe-4S] cluster as a cofactor.

It is found in the cytoplasm. The catalysed reaction is adenosine(2503) in 23S rRNA + 2 reduced [2Fe-2S]-[ferredoxin] + 2 S-adenosyl-L-methionine = 2-methyladenosine(2503) in 23S rRNA + 5'-deoxyadenosine + L-methionine + 2 oxidized [2Fe-2S]-[ferredoxin] + S-adenosyl-L-homocysteine. The enzyme catalyses adenosine(37) in tRNA + 2 reduced [2Fe-2S]-[ferredoxin] + 2 S-adenosyl-L-methionine = 2-methyladenosine(37) in tRNA + 5'-deoxyadenosine + L-methionine + 2 oxidized [2Fe-2S]-[ferredoxin] + S-adenosyl-L-homocysteine. Specifically methylates position 2 of adenine 2503 in 23S rRNA and position 2 of adenine 37 in tRNAs. m2A2503 modification seems to play a crucial role in the proofreading step occurring at the peptidyl transferase center and thus would serve to optimize ribosomal fidelity. The chain is Dual-specificity RNA methyltransferase RlmN from Dechloromonas aromatica (strain RCB).